A 1122-amino-acid chain; its full sequence is Telomerase reverse transcriptase (1122 aa).

The segment at 1 to 239 is RNA-interacting domain 1; it reads MTRAPRCPAV…TKRHLSLTST (239 aa). The interval 58–205 is GQ motif; the sequence is MHWGSQPPPA…RPVGRNFTNL (148 aa). A required for regulating specificity for telomeric DNA and for processivity for primer elongation region spans residues 137-141; that stretch reads WMLLL. A disordered region spans residues 213–296; it reads SSSRQEAPKP…KDLSSKGKVS (84 aa). The linker stretch occupies residues 240 to 328; sequence SVPSAKKARC…PRQNAFQLRP (89 aa). The segment covering 284 to 295 has biased composition (basic and acidic residues); sequence TAEKDLSSKGKV. The required for oligomerization stretch occupies residues 306-528; it reads CKHKPSSTSL…VPAAEHRLRE (223 aa). Residues 329–540 form an RNA-interacting domain 2 region; it reads FIETRHFLYS…LATFLFWLMD (212 aa). The TFLY; involved in RNA binding signature appears at 332–337; that stretch reads TRHFLY. Residues 381-511 are QFP motif; the sequence is LCRTHRLSRR…MKVEDCHWLR (131 aa). A CP motif region spans residues 402–422; the sequence is LVNHAECQYVRLLRSHCRFRT. Phosphoserine; by DYRK2 is present on serine 447. A Reverse transcriptase domain is found at 595–928; sequence EVRHHQDTWL…CLFPWCGLLL (334 aa). Tyrosine 697 bears the Phosphotyrosine; by SRC-type Tyr-kinases mark. Mg(2+) contacts are provided by aspartate 702, aspartate 861, and aspartate 862. The segment at 907–921 is required for oligomerization; that stretch reads LGGAAPYQLPAHCLF. Residues 923–927 are primer grip sequence; it reads WCGLL. A CTE region spans residues 929–1122; the sequence is DTQTLEVFCD…LSTDFQTILD (194 aa).

The protein belongs to the reverse transcriptase family. Telomerase subfamily. As to quaternary structure, catalytic component of the telomerase holoenzyme complex composed of one molecule of TERT, one molecule of WRAP53/TCAB1, two molecules of H/ACA ribonucleoprotein complex subunits DKC1, NOP10, NHP2 and GAR1, and a telomerase RNA template component (TERC). The telomerase holoenzyme complex is associated with TEP1, SMG6/EST1A and POT1. The molecular chaperone HSP90/P23 complex is required for correct assembly and stabilization of the active telomerase. Interacts directly with HSP90A and PTGES3. Interacts with HSPA1A; the interaction occurs in the absence of TERC and dissociates once the complex has formed. Interacts with RAN; the interaction promotes nuclear export of TERT. Interacts with XPO1. Interacts with PTPN11; the interaction retains TERT in the nucleus. Interacts with NCL (via RRM1 and C-terminal RRM4/Arg/Gly-rich domains); the interaction is important for nucleolar localization of TERT. Interacts with SMARCA4 (via the bromodomain); the interaction regulates Wnt-mediated signaling. Interacts with MCRS1 (isoform MCRS2); the interaction inhibits in vitro telomerase activity. Interacts with PIF1; the interaction has no effect on the elongation activity of TERT. Interacts with PML; the interaction recruits TERT to PML bodies and inhibits telomerase activity. Interacts with GNL3L. Interacts with isoform 1 and isoform 2 of NVL. Interacts with DHX36. Interacts with ATF7. Phosphorylation at Tyr-697 under oxidative stress leads to translocation of TERT to the cytoplasm and reduces its antiapoptotic activity. Dephosphorylated by SHP2/PTPN11 leading to nuclear retention. Phosphorylation by the AKT pathway promotes nuclear location. Phosphorylation at the G2/M phase at Ser-447 by DYRK2 promotes ubiquitination by the EDVP complex and degradation. In terms of processing, ubiquitinated by the EDVP complex, a E3 ligase complex following phosphorylation at Ser-447 by DYRK2. Ubiquitinated leads to proteasomal degradation. High activity in intestine, liver and testis, moderate in lung, very low in muscle, heart and brain.

It localises to the nucleus. It is found in the nucleolus. Its subcellular location is the nucleoplasm. The protein localises to the chromosome. The protein resides in the telomere. It localises to the cytoplasm. It is found in the PML body. It carries out the reaction DNA(n) + a 2'-deoxyribonucleoside 5'-triphosphate = DNA(n+1) + diphosphate. In terms of biological role, telomerase is a ribonucleoprotein enzyme essential for the replication of chromosome termini in most eukaryotes. Active in progenitor and cancer cells. Inactive, or very low activity, in normal somatic cells. Catalytic component of the teleromerase holoenzyme complex whose main activity is the elongation of telomeres by acting as a reverse transcriptase that adds simple sequence repeats to chromosome ends by copying a template sequence within the RNA component of the enzyme. Catalyzes the RNA-dependent extension of 3'-chromosomal termini with the 6-nucleotide telomeric repeat unit, 5'-TTAGGG-3'. The catalytic cycle involves primer binding, primer extension and release of product once the template boundary has been reached or nascent product translocation followed by further extension. More active on substrates containing 2 or 3 telomeric repeats. Telomerase activity is regulated by a number of factors including telomerase complex-associated proteins, chaperones and polypeptide modifiers. Modulates Wnt signaling. Plays important roles in aging and antiapoptosis. The sequence is that of Telomerase reverse transcriptase (Tert) from Mus musculus (Mouse).